We begin with the raw amino-acid sequence, 259 residues long: Ribonuclease T2-B (259 aa).

Residues 1 to 29 (MAPAEARGALPGWISVLGWGLALCSLCGA) form the signal peptide. A disulfide bridge links cysteine 53 with cysteine 59. The active site involves histidine 69. 3 disulfides stabilise this stretch: cysteine 79–cysteine 125, cysteine 188–cysteine 244, and cysteine 206–cysteine 217. Asparagine 80 and asparagine 110 each carry an N-linked (GlcNAc...) asparagine glycan. Catalysis depends on residues glutamate 118 and histidine 122. Asparagine 216 is a glycosylation site (N-linked (GlcNAc...) asparagine).

It belongs to the RNase T2 family.

It localises to the secreted. Its subcellular location is the lysosome lumen. The protein resides in the endoplasmic reticulum lumen. It is found in the mitochondrion intermembrane space. The enzyme catalyses a ribonucleotidyl-ribonucleotide-RNA + H2O = a 3'-end 3'-phospho-ribonucleotide-RNA + a 5'-end dephospho-ribonucleoside-RNA + H(+). It carries out the reaction an adenylyl-uridine-RNA = a 3'-end 2',3'-cyclophospho-AMP-RNA + a 5'-end dephospho-uridine-RNA. The catalysed reaction is a guanylyl-uridine-RNA = a 3'-end 2',3'-cyclophospho-GMP-RNA + a 5'-end dephospho-uridine-RNA. Its activity is regulated as follows. Inhibited by Zn(2+) and Cu(2+). Functionally, ribonuclease that plays an essential role in innate immune response by recognizing and degrading RNAs from microbial pathogens that are subsequently sensed by TLR8. Cleaves preferentially single-stranded RNA molecules between purine and uridine residues, which critically contributes to the supply of catabolic uridine and the generation of purine-2',3'-cyclophosphate-terminated oligoribonucleotides. In turn, RNase T2 degradation products promote the RNA-dependent activation of TLR8. In plasmacytoid dendritic cells, it cooperates with PLD3 or PLD4 5'-&gt;3' exonucleases to process RNA fragments and release 2',3'-cyclic guanosine monophosphate (2',3'-cGMP), a potent stimulatory ligand for TLR7. Also plays a key role in degradation of mitochondrial RNA and processing of non-coding RNA imported from the cytosol into mitochondria. Participates as well in degradation of mitochondrion-associated cytosolic rRNAs. This chain is Ribonuclease T2-B, found in Mus musculus (Mouse).